The primary structure comprises 268 residues: Esterase GME11355 (268 aa).

Active-site charge relay system residues include serine 122, aspartate 212, and histidine 240.

The protein belongs to the LovG family.

It functions in the pathway secondary metabolite biosynthesis. In terms of biological role, esterase; part of the gene cluster that mediates the biosynthesis of dibenzodioxocinones such as pestalotiollide B, a novel class of inhibitors against cholesterol ester transfer protein (CEPT). The biosynthesis initiates from condensation of acetate and malonate units catalyzed by the non-reducing PKS pks8/GME11356. Pks8/GME11356 lacks a thioesterase (TE) domain, which is important to the cyclizing of the third ring of atrochrysone carboxylic acid, and the esterase GME11355 might play the role of TE and catalyzes the cyclization reaction of the C ring. The lactamase-like protein GME11357 (or other beta-lactamases in Pestalotiopsis microspora) probably hydrolyzes the thioester bond between the ACP of pks8/GME11356 and the intermediate to release atrochrysone carboxylic acid, which is spontaneously dehydrates to form endocrocin anthrone. Endocrocin anthrone is further converted to emodin via the endocrocin intermediate. Emodin is then oxidized by several enzymes such as the Baeyer-Villiger oxidase GME11358, the oxidoreductase GME11367, the short chain dehydrogenase/reductase GME11373, as well as by other oxidoreductases from the cluster, to modify the A and C rings and open the B ring, and finally yield monodictyphenone. The prenyltransferase GME11375 may catalyze the addition reaction between the C5 side chains and the carbon bone of dibenzodioxocinones. The remaining biochemical reactions to the final product dibenzodioxocinones should be methylation catalyzed by methyltransferase GME11366 and reduction and lactonization reaction catalyzed by a series of oxidordeuctases. The protein is Esterase GME11355 of Pestalotiopsis microspora.